The following is a 107-amino-acid chain: U1-lycotoxin-Ls1q (107 aa).

The first 20 residues, methionine 1 to serine 20, serve as a signal peptide directing secretion. The propeptide occupies glutamate 21–arginine 41. 4 disulfides stabilise this stretch: cysteine 44–cysteine 59, cysteine 51–cysteine 68, cysteine 58–cysteine 86, and cysteine 70–cysteine 84.

It belongs to the neurotoxin 19 (CSTX) family. 04 (U1-Lctx) subfamily. Expressed by the venom gland.

The protein resides in the secreted. The polypeptide is U1-lycotoxin-Ls1q (Lycosa singoriensis (Wolf spider)).